Consider the following 458-residue polypeptide: NADH-ubiquinone oxidoreductase chain 4 (458 aa).

13 helical membrane-spanning segments follow: residues 23–43, 59–79, 99–119, 148–168, 174–194, 197–217, 227–247, 260–280, 289–311, 315–337, 355–375, 396–416, and 438–458; these read LLWT…TLTL, IDQF…LTIM, LLIL…LLMF, LYFL…LIMI, SLSI…TPWS, LWWI…IFHL, PIAG…YGMI, LAVP…SICL, IAYS…TPWA, ALAM…NITY, FPLM…LPPF, ILLL…MLIM, and LMLM…AIMI.

This sequence belongs to the complex I subunit 4 family.

It is found in the mitochondrion membrane. The enzyme catalyses a ubiquinone + NADH + 5 H(+)(in) = a ubiquinol + NAD(+) + 4 H(+)(out). Functionally, core subunit of the mitochondrial membrane respiratory chain NADH dehydrogenase (Complex I) that is believed to belong to the minimal assembly required for catalysis. Complex I functions in the transfer of electrons from NADH to the respiratory chain. The immediate electron acceptor for the enzyme is believed to be ubiquinone. The sequence is that of NADH-ubiquinone oxidoreductase chain 4 (MT-ND4) from Petromyzon marinus (Sea lamprey).